The primary structure comprises 270 residues: Glutamate racemase (270 aa).

Residues 10-11 (DS) and 42-43 (YG) contribute to the substrate site. The active-site Proton donor/acceptor is C74. 75–76 (NT) lines the substrate pocket. C189 functions as the Proton donor/acceptor in the catalytic mechanism. 190–191 (TH) contributes to the substrate binding site.

The protein belongs to the aspartate/glutamate racemases family.

It catalyses the reaction L-glutamate = D-glutamate. It functions in the pathway cell wall biogenesis; peptidoglycan biosynthesis. Its function is as follows. Provides the (R)-glutamate required for cell wall biosynthesis. This chain is Glutamate racemase, found in Bartonella quintana (strain Toulouse) (Rochalimaea quintana).